A 405-amino-acid chain; its full sequence is Saccharopepsin (405 aa).

Residues 1–22 (MFSLKALLPLALLLVSANQVAA) form the signal peptide. Positions 23-76 (KVHKAKIYKHELSDEMKEVTFEQHLAHLGQKYLTQFEKANPEVVFSREHPFFTE) are cleaved as a propeptide — activation peptide. In terms of domain architecture, Peptidase A1 spans 91-402 (YYTDITLGTP…DLGNNAVGLA (312 aa)). Aspartate 109 is a catalytic residue. A disulfide bridge links cysteine 122 with cysteine 127. The N-linked (GlcNAc...) asparagine glycan is linked to asparagine 144. The active site involves aspartate 294. A disulfide bond links cysteine 328 and cysteine 361. Asparagine 345 carries an N-linked (GlcNAc...) asparagine glycan.

The protein belongs to the peptidase A1 family.

Its subcellular location is the vacuole. The enzyme catalyses Hydrolysis of proteins with broad specificity for peptide bonds. Cleaves -Leu-Leu-|-Val-Tyr- bond in a synthetic substrate. Does not act on esters of Tyr or Arg.. Aspartyl protease implicated in the post-translational regulation of S.cerevisiae vacuolar proteinases. Acts on YSCB, on YSCY and on itself. This chain is Saccharopepsin (PEP4), found in Saccharomyces cerevisiae (strain ATCC 204508 / S288c) (Baker's yeast).